The sequence spans 272 residues: Ribonuclease HII (272 aa).

Residues 87 to 272 enclose the RNase H type-2 domain; that stretch reads KYVAGVDEVG…HRMSFLKNIL (186 aa). Residues aspartate 93, glutamate 94, and aspartate 188 each contribute to the a divalent metal cation site.

This sequence belongs to the RNase HII family. The cofactor is Mn(2+). Mg(2+) serves as cofactor.

The protein resides in the cytoplasm. It catalyses the reaction Endonucleolytic cleavage to 5'-phosphomonoester.. In terms of biological role, endonuclease that specifically degrades the RNA of RNA-DNA hybrids. This chain is Ribonuclease HII, found in Clostridium perfringens (strain 13 / Type A).